Here is a 110-residue protein sequence, read N- to C-terminus: Insulin (110 aa).

An N-terminal signal peptide occupies residues 1–24 (MALWMHLLTVLALLALWGPNTGQA). Cystine bridges form between cysteine 31–cysteine 96, cysteine 43–cysteine 109, and cysteine 95–cysteine 100. Positions 57 to 87 (ELEDPQVEQTELGMGLGAGGLQPLALEMALQ) are cleaved as a propeptide — c peptide.

This sequence belongs to the insulin family. In terms of assembly, heterodimer of a B chain and an A chain linked by two disulfide bonds.

The protein localises to the secreted. In terms of biological role, insulin decreases blood glucose concentration. It increases cell permeability to monosaccharides, amino acids and fatty acids. It accelerates glycolysis, the pentose phosphate cycle, and glycogen synthesis in liver. The protein is Insulin (INS) of Cavia porcellus (Guinea pig).